The sequence spans 219 residues: Ribonuclease HII (219 aa).

The region spanning 10–219 (HLEAGTDEAG…LLPEQTVLDL (210 aa)) is the RNase H type-2 domain. Residues aspartate 16, glutamate 17, and aspartate 108 each contribute to the a divalent metal cation site.

This sequence belongs to the RNase HII family. Mn(2+) is required as a cofactor. The cofactor is Mg(2+).

It localises to the cytoplasm. It catalyses the reaction Endonucleolytic cleavage to 5'-phosphomonoester.. Endonuclease that specifically degrades the RNA of RNA-DNA hybrids. The chain is Ribonuclease HII from Flavobacterium psychrophilum (strain ATCC 49511 / DSM 21280 / CIP 103535 / JIP02/86).